The primary structure comprises 330 residues: NmrA-like family domain-containing oxidoreductase notO (330 aa).

NADP(+)-binding positions include 12–17 (VGIGSL), 38–42 (HHFAQ), 59–60 (RS), 80–82 (IEA), and 160–163 (LGGG). Residues 12–32 (VGIGSLPAGLVALFMGATSGI) traverse the membrane as a helical segment. Positions 158 to 202 (SVLGGGLESPLNEQDLDLRDPKNWTFWSSSMHSGTMGTLTLERIA) are interaction with ASS1. Asparagine 180 and asparagine 207 each carry an N-linked (GlcNAc...) asparagine glycan.

The protein belongs to the NmrA-type oxidoreductase family.

Its subcellular location is the membrane. NmrA-like family domain-containing oxidoreductase; part of the gene cluster that mediates the biosynthesis of notoamide, a fungal indole alkaloid that belongs to a family of natural products containing a characteristic bicyclo[2.2.2]diazaoctane core. The first step of notoamide biosynthesis involves coupling of L-proline and L-tryptophan by the bimodular NRPS notE, to produce cyclo-L-tryptophan-L-proline called brevianamide F. The reverse prenyltransferase notF then acts as a deoxybrevianamide E synthase and converts brevianamide F to deoxybrevianamide E via reverse prenylation at C-2 of the indole ring leading to the bicyclo[2.2.2]diazaoctane core. Deoxybrevianamide E is further hydroxylated at C-6 of the indole ring, likely catalyzed by the cytochrome P450 monooxygenase notG, to yield 6-hydroxy-deoxybrevianamide E. 6-hydroxy-deoxybrevianamide E is a specific substrate of the prenyltransferase notC for normal prenylation at C-7 to produce 6-hydroxy-7-prenyl-deoxybrevianamide, also called notoamide S. As the proposed pivotal branching point in notoamide biosynthesis, notoamide S can be diverted to notoamide E through an oxidative pyran ring closure putatively catalyzed by either notH cytochrome P450 monooxygenase or the notD FAD-linked oxidoreductase. This step would be followed by an indole 2,3-epoxidation-initiated pinacol-like rearrangement catalyzed by the notB FAD-dependent monooxygenase leading to the formation of notoamide C and notoamide D. On the other hand notoamide S is converted to notoamide T by notH (or notD), a bifunctional oxidase that also functions as the intramolecular Diels-Alderase responsible for generation of (+)-notoamide T. To generate antipodal (-)-notoaminide T, notH' (or notD') in Aspergillus versicolor is expected to catalyze a Diels-Alder reaction leading to the opposite stereochemistry. The remaining oxidoreductase notD (or notH) likely catalyzes the oxidative pyran ring formation to yield (+)-stephacidin A. The FAD-dependent monooxygenase notI is highly similar to notB and is predicted to catalyze a similar conversion from (+)-stephacidin A to (-)-notoamide B via the 2,3-epoxidation of (+)-stephacidin A followed by a pinacol-type rearrangement. Finally, it remains unclear which enzyme could be responsible for the final hydroxylation steps leading to notoamide A and sclerotiamide. The function of notO in the notoamide biosynthesis has not been determined yet. The sequence is that of NmrA-like family domain-containing oxidoreductase notO from Aspergillus sp. (strain MF297-2).